Consider the following 406-residue polypeptide: Eukaryotic initiation factor 4A-I (406 aa).

Positions Met1 to Gly21 are disordered. Position 2 is an N-acetylserine (Ser2). Ser4 is modified (phosphoserine). Positions Asp32–Gln60 match the Q motif motif. One can recognise a Helicase ATP-binding domain in the interval Ile63–Ile234. ATP is bound at residue Ala76–Thr83. Lys118 is modified (N6-acetyllysine). A Glycyl lysine isopeptide (Lys-Gly) (interchain with G-Cter in SUMO2) cross-link involves residue Lys146. Residue Thr158 is modified to Phosphothreonine. Lys174 bears the N6-acetyllysine mark. The DEAD box motif lies at Asp182 to Asp185. Lys193 is subject to N6-acetyllysine. A Glycyl lysine isopeptide (Lys-Gly) (interchain with G-Cter in SUMO2) cross-link involves residue Lys225. An N6-acetyllysine; alternate modification is found at Lys238. Lys238 is covalently cross-linked (Glycyl lysine isopeptide (Lys-Gly) (interchain with G-Cter in SUMO2); alternate). In terms of domain architecture, Helicase C-terminal spans Gly245–Ile406. Glycyl lysine isopeptide (Lys-Gly) (interchain with G-Cter in SUMO2) cross-links involve residues Lys309, Lys369, and Lys381.

Belongs to the DEAD box helicase family. eIF4A subfamily. As to quaternary structure, eIF4F is a multi-subunit complex, the composition of which varies with external and internal environmental conditions. It is composed of at least EIF4A, EIF4E and EIF4G1/EIF4G3. Interacts with PAIP1, EIF4E and UPF2. Found in a complex with XPO7, EIF4A1, ARHGAP1, VPS26A, VPS29, VPS35 and SFN. May interact with NOM1. Interacts with PDCD4; this interferes with the interaction between EIF4A and EIF4G. Interacts with RBM4. Interacts with DDX3X in an RNA-independent manner. Interacts with PKP1 (via N-terminus); the interaction promotes EIF4A1 recruitment to the cap-dependent translation complex and EIF4A1 ATPase activity.

It localises to the cytoplasm. Its subcellular location is the perinuclear region. The protein localises to the cell membrane. It is found in the stress granule. The enzyme catalyses ATP + H2O = ADP + phosphate + H(+). ATP-dependent RNA helicase which is a subunit of the eIF4F complex involved in cap recognition and is required for mRNA binding to ribosome. In the current model of translation initiation, eIF4A unwinds RNA secondary structures in the 5'-UTR of mRNAs which is necessary to allow efficient binding of the small ribosomal subunit, and subsequent scanning for the initiator codon. As a result, promotes cell proliferation and growth. The protein is Eukaryotic initiation factor 4A-I (EIF4A1) of Pongo abelii (Sumatran orangutan).